Consider the following 119-residue polypeptide: MKFTKNEARLRRKVRIRKKISGTAERPRLVVYRSNLHIYAQIVDDTTGSTLVATSTLSISRTQEGVHANKAGAELVGKEIARLAKDKDIQSVVFDRNGYLYHGRIKAVADGAREAGLEF.

The protein belongs to the universal ribosomal protein uL18 family. In terms of assembly, part of the 50S ribosomal subunit; part of the 5S rRNA/L5/L18/L25 subcomplex. Contacts the 5S and 23S rRNAs.

In terms of biological role, this is one of the proteins that bind and probably mediate the attachment of the 5S RNA into the large ribosomal subunit, where it forms part of the central protuberance. In Nitratidesulfovibrio vulgaris (strain DP4) (Desulfovibrio vulgaris), this protein is Large ribosomal subunit protein uL18.